A 186-amino-acid chain; its full sequence is Elongation factor P (186 aa).

Belongs to the elongation factor P family.

The protein resides in the cytoplasm. It functions in the pathway protein biosynthesis; polypeptide chain elongation. In terms of biological role, involved in peptide bond synthesis. Stimulates efficient translation and peptide-bond synthesis on native or reconstituted 70S ribosomes in vitro. Probably functions indirectly by altering the affinity of the ribosome for aminoacyl-tRNA, thus increasing their reactivity as acceptors for peptidyl transferase. This chain is Elongation factor P, found in Shewanella frigidimarina (strain NCIMB 400).